A 567-amino-acid polypeptide reads, in one-letter code: Putative laccase-17 (567 aa).

The first 22 residues, 1-22 (MPSRGCSCWLLSLALLCSLAAA), serve as a signal peptide directing secretion. Plastocyanin-like domains lie at 30-146 (VIRE…PRDG) and 158-310 (ELAP…YGAA). The N-linked (GlcNAc...) asparagine glycan is linked to Asn76. His80, His82, His125, and His127 together coordinate Cu cation. Residues Asn187, Asn241, Asn298, Asn312, Asn327, Asn365, Asn368, Asn378, Asn388, and Asn430 are each glycosylated (N-linked (GlcNAc...) asparagine). The 137-residue stretch at 415 to 551 (DFPANPPVQF…AMAFLVDDGV (137 aa)) folds into the Plastocyanin-like 3 domain. Residues His468, His471, His473, His530, Cys531, His532, and His536 each contribute to the Cu cation site.

Belongs to the multicopper oxidase family. It depends on Cu cation as a cofactor.

It localises to the secreted. Its subcellular location is the extracellular space. The protein resides in the apoplast. The enzyme catalyses 4 hydroquinone + O2 = 4 benzosemiquinone + 2 H2O. In terms of biological role, lignin degradation and detoxification of lignin-derived products. The protein is Putative laccase-17 (LAC17) of Oryza sativa subsp. japonica (Rice).